The sequence spans 581 residues: uncharacterized protein (581 aa).

Residue Ser-28 is modified to Phosphoserine. The next 11 helical transmembrane spans lie at 61–81 (LVLI…AGSA), 100–120 (AGVL…ATFL), 125–145 (CVYL…ALVK), 187–207 (IYIL…GYIA), 214–234 (WIGW…LFTF), 340–360 (IFLF…DAWL), 382–402 (AVAI…IYGG), 426–446 (LWLM…FGIG), 458–478 (VGLG…MAYL), 486–506 (VLEA…VFTF), and 522–542 (ISIG…ILCG).

Belongs to the major facilitator superfamily.

The protein localises to the cytoplasm. It localises to the cell cortex. The protein resides in the membrane. This is an uncharacterized protein from Schizosaccharomyces pombe (strain 972 / ATCC 24843) (Fission yeast).